The primary structure comprises 177 residues: Large ribosomal subunit protein uL6 (177 aa).

The protein belongs to the universal ribosomal protein uL6 family. In terms of assembly, part of the 50S ribosomal subunit.

Its function is as follows. This protein binds to the 23S rRNA, and is important in its secondary structure. It is located near the subunit interface in the base of the L7/L12 stalk, and near the tRNA binding site of the peptidyltransferase center. In Vibrio atlanticus (strain LGP32) (Vibrio splendidus (strain Mel32)), this protein is Large ribosomal subunit protein uL6.